The sequence spans 443 residues: Ribulose bisphosphate carboxylase large chain (443 aa).

Asparagine 89 and threonine 139 together coordinate substrate. Lysine 141 serves as the catalytic Proton acceptor. Residue lysine 143 participates in substrate binding. Lysine 167, aspartate 169, and glutamate 170 together coordinate Mg(2+). Lysine 167 bears the N6-carboxylysine mark. The active-site Proton acceptor is the histidine 260. Residues arginine 261, histidine 293, and serine 345 each coordinate substrate.

This sequence belongs to the RuBisCO large chain family. Type I subfamily. In terms of assembly, heterohexadecamer of 8 large chains and 8 small chains; disulfide-linked. The disulfide link is formed within the large subunit homodimers. The cofactor is Mg(2+). The disulfide bond which can form in the large chain dimeric partners within the hexadecamer appears to be associated with oxidative stress and protein turnover.

The protein localises to the plastid. The protein resides in the chloroplast. The enzyme catalyses 2 (2R)-3-phosphoglycerate + 2 H(+) = D-ribulose 1,5-bisphosphate + CO2 + H2O. The catalysed reaction is D-ribulose 1,5-bisphosphate + O2 = 2-phosphoglycolate + (2R)-3-phosphoglycerate + 2 H(+). Its function is as follows. RuBisCO catalyzes two reactions: the carboxylation of D-ribulose 1,5-bisphosphate, the primary event in carbon dioxide fixation, as well as the oxidative fragmentation of the pentose substrate in the photorespiration process. Both reactions occur simultaneously and in competition at the same active site. The sequence is that of Ribulose bisphosphate carboxylase large chain from Sesamum indicum (Oriental sesame).